A 61-amino-acid polypeptide reads, in one-letter code: Photosystem II reaction center protein K (61 aa).

Positions 1-24 (MPNILSLTCICFNSVLCPTSFFFA) are excised as a propeptide. The chain crosses the membrane as a helical span at residues 32 to 52 (IFNPIVDVMPVIPVLFFLLAF).

It belongs to the PsbK family. As to quaternary structure, PSII is composed of 1 copy each of membrane proteins PsbA, PsbB, PsbC, PsbD, PsbE, PsbF, PsbH, PsbI, PsbJ, PsbK, PsbL, PsbM, PsbT, PsbX, PsbY, PsbZ, Psb30/Ycf12, at least 3 peripheral proteins of the oxygen-evolving complex and a large number of cofactors. It forms dimeric complexes.

It is found in the plastid. Its subcellular location is the chloroplast thylakoid membrane. Its function is as follows. One of the components of the core complex of photosystem II (PSII). PSII is a light-driven water:plastoquinone oxidoreductase that uses light energy to abstract electrons from H(2)O, generating O(2) and a proton gradient subsequently used for ATP formation. It consists of a core antenna complex that captures photons, and an electron transfer chain that converts photonic excitation into a charge separation. This chain is Photosystem II reaction center protein K, found in Sorghum bicolor (Sorghum).